Consider the following 524-residue polypeptide: MSATLQRVAPLSGGEGHRTPIDSGAGFVLEMRSITKAFPGVLALDGMSLKVRAGTVHVLVGENGAGKSTLMKILSGIYAIDGGEILFRGEKLDHQSAAAALERGISMIHQELSPVLDMTIAENIFLGREPTYSRTGVLSRFVDFDRMNSDTQTLLDRLGLKYSPQTKMRDLSIATMQLIEIVKAISREASLIIMDEPTSAISDTEVAMLFRQIADLKAAGVAIIYITHKMDEIFQIADDITVMRDGQFVAAAPASEYEPAKLISQMVGRTISSIFPKEEVPIGDIVLSVENLSRDGVFDNVGFEVRAGEIVGLSGLIGAGRTEVARVIFGLDAADAGVVRLNGKPLKLTSPKDAIANGIAMVSEDRKAEGLVLCRSVGENISLANLKKFASGIFISERQEETASQRMIKMLQIKTPDTAMIVENLSGGNQQKIVLAKWLLGDLKLLILDEPTRGIDVGSKSEIHRLMTEFARQGLAIIMISSELPEILGMSDRVVVMSEGRVTGELTRAEATQENIMRLATGGH.

ABC transporter domains are found at residues 29–270 (LEMR…VGRT) and 280–524 (VPIG…TGGH). 61–68 (GENGAGKS) contacts ATP.

This sequence belongs to the ABC transporter superfamily. Carbohydrate importer 2 (CUT2) (TC 3.A.1.2) family.

It localises to the cell inner membrane. The enzyme catalyses D-ribose(out) + ATP + H2O = D-ribose(in) + ADP + phosphate + H(+). The catalysed reaction is D-galactose(out) + ATP + H2O = D-galactose(in) + ADP + phosphate + H(+). Its function is as follows. Part of an ABC transporter complex involved in carbohydrate import. Could be involved in ribose, galactose and/or methyl galactoside import. Responsible for energy coupling to the transport system. The protein is Putative ribose/galactose/methyl galactoside import ATP-binding protein 1 of Rhizobium etli (strain ATCC 51251 / DSM 11541 / JCM 21823 / NBRC 15573 / CFN 42).